A 147-amino-acid polypeptide reads, in one-letter code: Ubiquitin-conjugating enzyme E2 D2 (147 aa).

A UBC core domain is found at 1 to 147 (MALKRIHKEL…SREWTQKYAM (147 aa)). The active-site Glycyl thioester intermediate is the Cys-85.

It belongs to the ubiquitin-conjugating enzyme family. As to quaternary structure, interacts with SCF (SKP1-CUL1-F-box protein) E3 ubiquitin ligase complex. Interacts with CNOT4 (via RING domain). Interacts with E3 ubiquitin-protein ligases CBLC, PJA1 and PJA2. Interacts with PDZRN3. Interacts with PPP1R11. Interacts with E3 ubiquitin-protein ligase PHF7; the interaction inhibits cleavage of PHF7 and promotes association of the complex with the nucleosome core particle.

It catalyses the reaction S-ubiquitinyl-[E1 ubiquitin-activating enzyme]-L-cysteine + [E2 ubiquitin-conjugating enzyme]-L-cysteine = [E1 ubiquitin-activating enzyme]-L-cysteine + S-ubiquitinyl-[E2 ubiquitin-conjugating enzyme]-L-cysteine.. The enzyme catalyses S-ubiquitinyl-[E1 ubiquitin-activating enzyme]-L-cysteine + [acceptor protein]-L-lysine = [E1 ubiquitin-activating enzyme]-L-cysteine + N(6)-monoubiquitinyl-[acceptor protein]-L-lysine.. It functions in the pathway protein modification; protein ubiquitination. Functionally, accepts ubiquitin from the E1 complex and catalyzes its covalent attachment to other proteins. In vitro catalyzes 'Lys-48'-linked polyubiquitination. Mediates the selective degradation of short-lived and abnormal proteins. Functions in the E6/E6-AP-induced ubiquitination of p53/TP53. Mediates ubiquitination of PEX5 and SQSTM1 and autoubiquitination of STUB1 and TRAF6. Involved in the signal-induced conjugation and subsequent degradation of NFKBIA, FBXW2-mediated GCM1 ubiquitination and degradation, MDM2-dependent degradation of p53/TP53 and the activation of MAVS in the mitochondria by RIGI in response to viral infection. Essential for viral activation of IRF3. The protein is Ubiquitin-conjugating enzyme E2 D2 (UBE2D2) of Sus scrofa (Pig).